Consider the following 271-residue polypeptide: 4-diphosphocytidyl-2-C-methyl-D-erythritol kinase (271 aa).

The active site involves K17. Residue 97–107 (PVGSGLGGGSS) coordinates ATP. Residue D137 is part of the active site.

The protein belongs to the GHMP kinase family. IspE subfamily.

The catalysed reaction is 4-CDP-2-C-methyl-D-erythritol + ATP = 4-CDP-2-C-methyl-D-erythritol 2-phosphate + ADP + H(+). It participates in isoprenoid biosynthesis; isopentenyl diphosphate biosynthesis via DXP pathway; isopentenyl diphosphate from 1-deoxy-D-xylulose 5-phosphate: step 3/6. Its function is as follows. Catalyzes the phosphorylation of the position 2 hydroxy group of 4-diphosphocytidyl-2C-methyl-D-erythritol. This is 4-diphosphocytidyl-2-C-methyl-D-erythritol kinase from Thermotoga petrophila (strain ATCC BAA-488 / DSM 13995 / JCM 10881 / RKU-1).